The chain runs to 267 residues: Deoxyribose-phosphate aldolase (267 aa).

Asp123 (proton donor/acceptor) is an active-site residue. Lys185 (schiff-base intermediate with acetaldehyde) is an active-site residue. Lys217 serves as the catalytic Proton donor/acceptor.

Belongs to the DeoC/FbaB aldolase family. DeoC type 1 subfamily.

It localises to the cytoplasm. It carries out the reaction 2-deoxy-D-ribose 5-phosphate = D-glyceraldehyde 3-phosphate + acetaldehyde. It participates in carbohydrate degradation; 2-deoxy-D-ribose 1-phosphate degradation; D-glyceraldehyde 3-phosphate and acetaldehyde from 2-deoxy-alpha-D-ribose 1-phosphate: step 2/2. Its function is as follows. Catalyzes a reversible aldol reaction between acetaldehyde and D-glyceraldehyde 3-phosphate to generate 2-deoxy-D-ribose 5-phosphate. The sequence is that of Deoxyribose-phosphate aldolase from Coccidioides immitis (strain RS) (Valley fever fungus).